Consider the following 903-residue polypeptide: DNA-directed DNA polymerase (903 aa).

Positions 103–340 are 3'-5'exonuclease; the sequence is YDHTKIRVAN…VLQIDAKRQF (238 aa). 3 residues coordinate Mg(2+): D114, E116, and D222. Residues 248–264 form a beta hairpin region; sequence TRVKVIENMYGSREIIT. Positions 327, 411, and 412 each coordinate Mg(2+). A polymerase region spans residues 380-903; it reads IPQGRSHPVQ…KASLFDMFDF (524 aa). Residues 414 to 416, R482, and K560 each bind substrate; that span reads SLY. Residue D623 coordinates Mg(2+). The binding of DNA in B-conformation stretch occupies residues 705–708; it reads KKRY. An interaction with the polymerase clamp region spans residues 897–903; sequence LFDMFDF.

The protein belongs to the DNA polymerase type-B family. In terms of assembly, part of the replicase complex that includes the DNA polymerase, the polymerase clamp, the clamp loader complex, the single-stranded DNA binding protein, and the primase/helicase. Interacts with the polymerase clamp; this interaction constitutes the polymerase holoenzyme. Mg(2+) serves as cofactor.

It carries out the reaction DNA(n) + a 2'-deoxyribonucleoside 5'-triphosphate = DNA(n+1) + diphosphate. Replicates the viral genomic DNA. This polymerase possesses two enzymatic activities: DNA synthesis (polymerase) and an exonucleolytic activity that degrades single-stranded DNA in the 3'- to 5'-direction for proofreading purpose. The chain is DNA-directed DNA polymerase (43) from Escherichia coli (Bacteriophage RB69).